The primary structure comprises 541 residues: Zinc finger protein 655 (541 aa).

The tract at residues 1–22 (MEEVTSQEAAESPRGHFQPLEN) is disordered. C2H2-type zinc fingers lie at residues 243 to 265 (YKCDTCGKTFHQASALTRHQRIH), 271 to 293 (YKCKECEKSFSQSSSLSRHKRIH), 334 to 356 (YKCGTCERVFSRSVHLTQHQRTH), 361 to 383 (CKCTVCGSDFCHTSYLVEHQRLH), 411 to 433 (YSCNECGKDFRLNSHLIQHQRIH), and 439 to 461 (HECNECGKSFSQTSCLIQHHKMH). The segment at 495-517 (FDCDAWEENFSQRAHLIQHERVH) adopts a C2H2-type 7; degenerate zinc-finger fold.

It belongs to the krueppel C2H2-type zinc-finger protein family. Interacts with VAV1 and CDK4. Interacts with INTS13; promoting association with the integrator complex.

The protein localises to the nucleus. In terms of biological role, probable transcription factor. This is Zinc finger protein 655 (Znf655) from Mus musculus (Mouse).